The primary structure comprises 319 residues: D-galacturonate reductase (319 aa).

Catalysis depends on tyrosine 58, which acts as the Proton donor. A substrate-binding site is contributed by histidine 121. Position 216–275 (216–275) interacts with NADP(+); that stretch reads SPLGAARTKWGDDRVLGSDIIEEIAQAKGKSTAQISLRWVYEQGVSIVTKSYNKERMRQN.

The protein belongs to the aldo/keto reductase family. Expressed specifically in the receptacle tissue of the fruit.

The enzyme catalyses L-galactonate + NADP(+) = aldehydo-D-galacturonate + NADPH + H(+). It functions in the pathway cofactor biosynthesis; L-ascorbate biosynthesis. Involved in ascorbic acid (vitamin C) biosynthesis. The chain is D-galacturonate reductase (GALUR) from Fragaria ananassa (Strawberry).